The primary structure comprises 64 residues: Large ribosomal subunit protein bL35 (64 aa).

A disordered region spans residues 1 to 54; sequence MPKIKSNSGAAKRFKKTAHGFKHKQSFRSHILTKKSTKRKRQLRGMKQIHDADK. Positions 12–44 are enriched in basic residues; it reads KRFKKTAHGFKHKQSFRSHILTKKSTKRKRQLR.

It belongs to the bacterial ribosomal protein bL35 family.

The polypeptide is Large ribosomal subunit protein bL35 (Chromohalobacter salexigens (strain ATCC BAA-138 / DSM 3043 / CIP 106854 / NCIMB 13768 / 1H11)).